The chain runs to 1479 residues: C-type mannose receptor 2 (1479 aa).

Residues 1 to 30 form the signal peptide; it reads MGPGRPAPAPWPRHLLRCVLLLGCLHLGRP. Residues 31-1414 are Extracellular-facing; sequence GAPGDAALPE…PSALPENPAA (1384 aa). The 127-residue stretch at 41 to 167 folds into the Ricin B-type lectin domain; sequence PNVFLIFSHG…WRIYGSEEDL (127 aa). Cysteine 54 and cysteine 68 are oxidised to a cystine. An N-linked (GlcNAc...) (complex) asparagine glycan is attached at asparagine 69. A disulfide bond links cysteine 93 and cysteine 112. Asparagine 140 carries an N-linked (GlcNAc...) asparagine glycan. The Fibronectin type-II domain occupies 182 to 230; it reads SHGKPCTIPFKYDNQWFHGCTSTGREDGHLWCATTQDYGKDERWGFCPI. Intrachain disulfides connect cysteine 187–cysteine 213, cysteine 201–cysteine 228, cysteine 266–cysteine 359, and cysteine 335–cysteine 351. A C-type lectin 1 domain is found at 244–360; the sequence is LTDSCYQFNF…CSIALPYVCK (117 aa). N-linked (GlcNAc...) asparagine glycosylation occurs at asparagine 364. C-type lectin domains are found at residues 389–505, 528–644, 678–809, and 832–951; these read FQGH…SICK, HSPS…RYIC, KLRY…WICK, and FQEA…YICK. Intrachain disulfides connect cysteine 410–cysteine 504 and cysteine 481–cysteine 496. The N-linked (GlcNAc...) asparagine glycan is linked to asparagine 588. Disulfide bonds link cysteine 618–cysteine 635, cysteine 704–cysteine 808, cysteine 785–cysteine 800, cysteine 853–cysteine 950, and cysteine 927–cysteine 942. 2 N-linked (GlcNAc...) asparagine glycosylation sites follow: asparagine 954 and asparagine 1029. C-type lectin domains are found at residues 979–1107, 1132–1243, and 1273–1393; these read FLNK…GFIC, YLNG…GAVC, and FREH…GVVC. Cysteine 1078 and cysteine 1098 are disulfide-bonded. A Glycyl lysine isopeptide (Lys-Gly) (interchain with G-Cter in SUMO1) cross-link involves residue lysine 1142. An intrachain disulfide couples cysteine 1220 to cysteine 1234. Asparagine 1350 carries an N-linked (GlcNAc...) asparagine glycan. The cysteines at positions 1369 and 1384 are disulfide-linked. Residues 1415 to 1435 form a helical membrane-spanning segment; the sequence is LVVVLMAVLLLLALLTAALIL. At 1436–1479 the chain is on the cytoplasmic side; that stretch reads YRRRQSIERGAFEGARYSRSSSSPTEATEKNILVSDMEMNEQQE. Residues 1450 to 1479 form a disordered region; that stretch reads ARYSRSSSSPTEATEKNILVSDMEMNEQQE.

In terms of assembly, interacts with C-terminal region of type I collagen/COL1A1. Interacts directly with PLAUR/UPAR and PLAU/pro-UPA to form a tri-molecular complex. Interacts with collagen V. N-glycosylated. In terms of tissue distribution, ubiquitous with low expression in brain, placenta, lung, kidney, pancreas, spleen, thymus and colon. Expressed in endothelial cells, fibroblasts and macrophages. Highly expressed in fetal lung and kidney.

The protein resides in the membrane. Its function is as follows. May play a role as endocytotic lectin receptor displaying calcium-dependent lectin activity. Internalizes glycosylated ligands from the extracellular space for release in an endosomal compartment via clathrin-mediated endocytosis. May be involved in plasminogen activation system controlling the extracellular level of PLAUR/PLAU, and thus may regulate protease activity at the cell surface. May contribute to cellular uptake, remodeling and degradation of extracellular collagen matrices. May play a role during cancer progression as well as in other chronic tissue destructive diseases acting on collagen turnover. May participate in remodeling of extracellular matrix cooperating with the matrix metalloproteinases (MMPs). This chain is C-type mannose receptor 2 (MRC2), found in Homo sapiens (Human).